The primary structure comprises 683 residues: Probable metal-nicotianamine transporter YSL3 (683 aa).

A run of 14 helical transmembrane segments spans residues 29–49, 58–78, 97–117, 142–162, 204–224, 265–285, 309–329, 372–392, 404–424, 448–468, 490–510, 553–573, 595–615, and 628–648; these read LVTP…CFVG, IVPA…KWLI, MFLL…GFAT, HVPI…GVLI, VATI…QWFY, IVNF…YPFL, VFIS…TLIT, IPIP…TIAI, LAVL…ATGL, PGAV…LHIS, TGQI…FLAF, CMTF…VVLV, FFAG…LLAW, and SAVA…SALL.

The protein belongs to the YSL (TC 2.A.67.2) family.

It localises to the membrane. Its function is as follows. May be involved in the transport of nicotianamine-chelated metals. The protein is Probable metal-nicotianamine transporter YSL3 (YSL3) of Oryza sativa subsp. japonica (Rice).